A 162-amino-acid polypeptide reads, in one-letter code: 2-C-methyl-D-erythritol 2,4-cyclodiphosphate synthase (162 aa).

2 residues coordinate a divalent metal cation: D8 and H10. 4-CDP-2-C-methyl-D-erythritol 2-phosphate-binding positions include 8 to 10 (DVH) and 36 to 37 (HS). A divalent metal cation is bound at residue H44. 4-CDP-2-C-methyl-D-erythritol 2-phosphate is bound by residues 58–60 (DIG), 63–67 (FPDTD), 102–108 (AQAPKMA), 134–137 (TTTE), F141, and R144.

Belongs to the IspF family. In terms of assembly, homotrimer. It depends on a divalent metal cation as a cofactor.

It catalyses the reaction 4-CDP-2-C-methyl-D-erythritol 2-phosphate = 2-C-methyl-D-erythritol 2,4-cyclic diphosphate + CMP. It functions in the pathway isoprenoid biosynthesis; isopentenyl diphosphate biosynthesis via DXP pathway; isopentenyl diphosphate from 1-deoxy-D-xylulose 5-phosphate: step 4/6. Its function is as follows. Involved in the biosynthesis of isopentenyl diphosphate (IPP) and dimethylallyl diphosphate (DMAPP), two major building blocks of isoprenoid compounds. Catalyzes the conversion of 4-diphosphocytidyl-2-C-methyl-D-erythritol 2-phosphate (CDP-ME2P) to 2-C-methyl-D-erythritol 2,4-cyclodiphosphate (ME-CPP) with a corresponding release of cytidine 5-monophosphate (CMP). In Yersinia enterocolitica serotype O:8 / biotype 1B (strain NCTC 13174 / 8081), this protein is 2-C-methyl-D-erythritol 2,4-cyclodiphosphate synthase.